We begin with the raw amino-acid sequence, 254 residues long: HTH-type transcriptional regulator GolR (254 aa).

The HTH deoR-type domain maps to 3–58; it reads PFERQNKIIHLLDQNNKITVPELSRILDVSISTIRNDLSALEESGMIKKVHGGAVL. The H-T-H motif DNA-binding region spans 20–39; the sequence is ITVPELSRILDVSISTIRND.

Involved in the glycerol metabolism. Repressor of the gol operon for glycerol metabolism. This chain is HTH-type transcriptional regulator GolR, found in Listeria innocua serovar 6a (strain ATCC BAA-680 / CLIP 11262).